The sequence spans 120 residues: UPF0102 protein FRAAL5785 (120 aa).

The protein belongs to the UPF0102 family.

The protein is UPF0102 protein FRAAL5785 of Frankia alni (strain DSM 45986 / CECT 9034 / ACN14a).